Reading from the N-terminus, the 215-residue chain is Probable phosphoglycerate mutase GpmB (215 aa).

Substrate contacts are provided by residues 8 to 15 (RHGETQWN), 21 to 22 (QG), arginine 58, arginine 60, 82 to 85 (ELNM), 104 to 105 (RR), and 151 to 152 (GI). Residue histidine 9 is the Tele-phosphohistidine intermediate of the active site. Glutamate 82 serves as the catalytic Proton donor/acceptor.

This sequence belongs to the phosphoglycerate mutase family. GpmB subfamily.

It carries out the reaction (2R)-2-phosphoglycerate = (2R)-3-phosphoglycerate. The protein operates within carbohydrate degradation; glycolysis; pyruvate from D-glyceraldehyde 3-phosphate: step 3/5. The polypeptide is Probable phosphoglycerate mutase GpmB (Escherichia coli O1:K1 / APEC).